A 730-amino-acid polypeptide reads, in one-letter code: Tubulin polyglutamylase ttll-5 (730 aa).

In terms of domain architecture, TTL spans 120–478 (RLRLTFKMMR…PLLDRKIIDS (359 aa)). ATP-binding positions include 278–281 (SRYL), K291, and D293. Residues 594-618 (KKNTKNSSGSSKASSSSASASSSSS) form a disordered region. The span at 600 to 618 (SSGSSKASSSSASASSSSS) shows a compositional bias: low complexity.

This sequence belongs to the tubulin--tyrosine ligase family. Expressed in body wall muscles. Not expressed in sensory neurons.

The catalysed reaction is L-glutamyl-[protein] + L-glutamate + ATP = gamma-L-glutamyl-L-glutamyl-[protein] + ADP + phosphate + H(+). Its function is as follows. Polyglutamylase which preferentially modifies alpha-tubulin. Involved in the side-chain initiation step of the polyglutamylation reaction rather than in the elongation step. Together with ttll-4 and ttll-11, required for male mating. Probably by regulating microtubule stability via the glutamylation of tubulin, negatively regulates axon regrowth after injury in PLM neurons. This chain is Tubulin polyglutamylase ttll-5, found in Caenorhabditis elegans.